The sequence spans 525 residues: Putative ribose/galactose/methyl galactoside import ATP-binding protein (525 aa).

A compositionally biased stretch (polar residues) spans 1–15 (MFGSATANPPAQRNL). The interval 1–23 (MFGSATANPPAQRNLPSGDGDGG) is disordered. ABC transporter domains follow at residues 33–269 (LEIS…VGRE) and 279–523 (KPAG…SGHK). 65-72 (GENGAGKS) contributes to the ATP binding site.

Belongs to the ABC transporter superfamily. Carbohydrate importer 2 (CUT2) (TC 3.A.1.2) family.

It localises to the cell inner membrane. It carries out the reaction D-ribose(out) + ATP + H2O = D-ribose(in) + ADP + phosphate + H(+). The catalysed reaction is D-galactose(out) + ATP + H2O = D-galactose(in) + ADP + phosphate + H(+). Functionally, part of an ABC transporter complex involved in carbohydrate import. Could be involved in ribose, galactose and/or methyl galactoside import. Responsible for energy coupling to the transport system. The chain is Putative ribose/galactose/methyl galactoside import ATP-binding protein from Pseudomonas syringae pv. syringae (strain B728a).